The following is a 757-amino-acid chain: uncharacterized protein (757 aa).

In terms of domain architecture, S1 motif spans 640-709 (GMILEGVVSN…ARKRIALTMR (70 aa)). Residues 711-741 (DDEPGGAKHKMPSENRSRERTAGRKPQRNDR) are compositionally biased toward basic and acidic residues. The disordered stretch occupies residues 711 to 757 (DDEPGGAKHKMPSENRSRERTAGRKPQRNDRAPANSAMADAFAKLKR).

This is an uncharacterized protein from Neisseria meningitidis serogroup B (strain ATCC BAA-335 / MC58).